Here is a 466-residue protein sequence, read N- to C-terminus: Argininosuccinate lyase (466 aa).

Belongs to the lyase 1 family. Argininosuccinate lyase subfamily.

The protein localises to the cytoplasm. The enzyme catalyses 2-(N(omega)-L-arginino)succinate = fumarate + L-arginine. The protein operates within amino-acid biosynthesis; L-arginine biosynthesis; L-arginine from L-ornithine and carbamoyl phosphate: step 3/3. The sequence is that of Argininosuccinate lyase from Bartonella bacilliformis (strain ATCC 35685 / KC583 / Herrer 020/F12,63).